Consider the following 590-residue polypeptide: V-type ATP synthase alpha chain (590 aa).

ATP is bound at residue 232-239; it reads GPFGSGKT.

The protein belongs to the ATPase alpha/beta chains family.

The catalysed reaction is ATP + H2O + 4 H(+)(in) = ADP + phosphate + 5 H(+)(out). Its function is as follows. Produces ATP from ADP in the presence of a proton gradient across the membrane. The V-type alpha chain is a catalytic subunit. The protein is V-type ATP synthase alpha chain of Thermoanaerobacter sp. (strain X514).